Here is a 426-residue protein sequence, read N- to C-terminus: 3-phosphoshikimate 1-carboxyvinyltransferase (426 aa).

3-phosphoshikimate is bound by residues lysine 20, serine 21, and arginine 25. Lysine 20 is a binding site for phosphoenolpyruvate. Residues glycine 92 and arginine 120 each contribute to the phosphoenolpyruvate site. Serine 166, glutamine 168, aspartate 312, and lysine 339 together coordinate 3-phosphoshikimate. Glutamine 168 serves as a coordination point for phosphoenolpyruvate. Aspartate 312 serves as the catalytic Proton acceptor. Arginine 385 lines the phosphoenolpyruvate pocket.

It belongs to the EPSP synthase family. In terms of assembly, monomer.

It localises to the cytoplasm. The catalysed reaction is 3-phosphoshikimate + phosphoenolpyruvate = 5-O-(1-carboxyvinyl)-3-phosphoshikimate + phosphate. It participates in metabolic intermediate biosynthesis; chorismate biosynthesis; chorismate from D-erythrose 4-phosphate and phosphoenolpyruvate: step 6/7. Catalyzes the transfer of the enolpyruvyl moiety of phosphoenolpyruvate (PEP) to the 5-hydroxyl of shikimate-3-phosphate (S3P) to produce enolpyruvyl shikimate-3-phosphate and inorganic phosphate. The sequence is that of 3-phosphoshikimate 1-carboxyvinyltransferase from Streptococcus suis (strain 98HAH33).